We begin with the raw amino-acid sequence, 430 residues long: Tyrosine--tRNA ligase (430 aa).

Y32 contacts L-tyrosine. Residues P37–H46 carry the 'HIGH' region motif. L-tyrosine contacts are provided by Y172 and Q176. The 'KMSKS' region signature appears at K232–T236. K235 serves as a coordination point for ATP. The 68-residue stretch at V362–A429 folds into the S4 RNA-binding domain.

It belongs to the class-I aminoacyl-tRNA synthetase family. TyrS type 1 subfamily. Homodimer.

The protein localises to the cytoplasm. The catalysed reaction is tRNA(Tyr) + L-tyrosine + ATP = L-tyrosyl-tRNA(Tyr) + AMP + diphosphate + H(+). Catalyzes the attachment of tyrosine to tRNA(Tyr) in a two-step reaction: tyrosine is first activated by ATP to form Tyr-AMP and then transferred to the acceptor end of tRNA(Tyr). The sequence is that of Tyrosine--tRNA ligase from Bacteroides fragilis (strain ATCC 25285 / DSM 2151 / CCUG 4856 / JCM 11019 / LMG 10263 / NCTC 9343 / Onslow / VPI 2553 / EN-2).